We begin with the raw amino-acid sequence, 132 residues long: Precursor of CEP10 (132 aa).

The signal sequence occupies residues 1–19 (MKLFIIIVVTSLTISKVFD). The propeptide occupies 20–66 (KTLVTIEARNLRKMDRHEHFNANEDFVEAKMLKKIDNKNNLNNRCIN). 2 positions are modified to hydroxyproline: proline 70 and proline 73. A propeptide spanning residues 82–91 (PKVINNKFTK) is cleaved from the precursor. A hydroxyproline mark is found at proline 95, proline 98, and proline 102. Residues 107-116 (LRVVNNKFTN) constitute a propeptide that is removed on maturation. Proline 120, proline 123, and proline 127 each carry hydroxyproline. A propeptide is located at residue proline 132.

It belongs to the C-terminally encoded plant signaling peptide (CEP) family. As to quaternary structure, interacts with CEP receptors (e.g. CEPR1 and CEPR2). The mature small signaling peptide is generated by proteolytic processing of the longer precursor.

Its subcellular location is the secreted. It is found in the extracellular space. The protein resides in the apoplast. In terms of biological role, extracellular signaling peptide that may regulate primary root growth rate and systemic nitrogen (N)-demand signaling. This chain is Precursor of CEP10, found in Arabidopsis thaliana (Mouse-ear cress).